The sequence spans 195 residues: Transcriptional regulator LdrP (195 aa).

One can recognise an HTH crp-type domain in the interval 110 to 182; that stretch reads GELRARIARY…YRRVYLLDLA (73 aa). Positions 142-161 form a DNA-binding region, H-T-H motif; sequence HEEIADATASIRESVSKVLA.

Activates transcription. Positively regulates PcrtB promoter upstream of the crtB operon in a cAMP-independent manner. Regulated genes include genes encoding DNA photolyase, phytoene synthase and cytochrome P450 monooxygenase, which are involved in carotenoid biosynthesis. Positively regulates the light-inducible gene cluster in the megaplasmid in a cAMP-independent manner. This is Transcriptional regulator LdrP from Thermus thermophilus (strain ATCC BAA-163 / DSM 7039 / HB27).